The primary structure comprises 206 residues: Thiamine-phosphate synthase (206 aa).

Residues 36-40 (QLRMK) and Asn-68 each bind 4-amino-2-methyl-5-(diphosphooxymethyl)pyrimidine. Mg(2+)-binding residues include Asp-69 and Asp-88. Ser-106 lines the 4-amino-2-methyl-5-(diphosphooxymethyl)pyrimidine pocket. 132-134 (TNT) is a binding site for 2-[(2R,5Z)-2-carboxy-4-methylthiazol-5(2H)-ylidene]ethyl phosphate. 4-amino-2-methyl-5-(diphosphooxymethyl)pyrimidine is bound at residue Lys-135. Residues Gly-162 and 182–183 (VS) contribute to the 2-[(2R,5Z)-2-carboxy-4-methylthiazol-5(2H)-ylidene]ethyl phosphate site.

The protein belongs to the thiamine-phosphate synthase family. It depends on Mg(2+) as a cofactor.

The enzyme catalyses 2-[(2R,5Z)-2-carboxy-4-methylthiazol-5(2H)-ylidene]ethyl phosphate + 4-amino-2-methyl-5-(diphosphooxymethyl)pyrimidine + 2 H(+) = thiamine phosphate + CO2 + diphosphate. The catalysed reaction is 2-(2-carboxy-4-methylthiazol-5-yl)ethyl phosphate + 4-amino-2-methyl-5-(diphosphooxymethyl)pyrimidine + 2 H(+) = thiamine phosphate + CO2 + diphosphate. It carries out the reaction 4-methyl-5-(2-phosphooxyethyl)-thiazole + 4-amino-2-methyl-5-(diphosphooxymethyl)pyrimidine + H(+) = thiamine phosphate + diphosphate. It participates in cofactor biosynthesis; thiamine diphosphate biosynthesis; thiamine phosphate from 4-amino-2-methyl-5-diphosphomethylpyrimidine and 4-methyl-5-(2-phosphoethyl)-thiazole: step 1/1. Condenses 4-methyl-5-(beta-hydroxyethyl)thiazole monophosphate (THZ-P) and 2-methyl-4-amino-5-hydroxymethyl pyrimidine pyrophosphate (HMP-PP) to form thiamine monophosphate (TMP). This chain is Thiamine-phosphate synthase, found in Methanococcus vannielii (strain ATCC 35089 / DSM 1224 / JCM 13029 / OCM 148 / SB).